The chain runs to 361 residues: uncharacterized protein (361 aa).

Positions 1-17 are cleaved as a signal peptide; sequence MNLFIYVLLLSIWTSSC. Over 18–47 the chain is Extracellular; that stretch reads LDRNESNGSATAVTTHAEFKQTKLQELRRR. The N-linked (GlcNAc...) asparagine glycan is linked to Asn-24. Residues 48–68 traverse the membrane as a helical segment; it reads LLIIVIGTLITGYMVSCTCLL. Over 69–361 the chain is Cytoplasmic; sequence HYSCDSEEAH…EDIYKNSRNN (293 aa). Positions 95 to 106 are enriched in polar residues; sequence SSKISFTDSKSP. A disordered region spans residues 95–197; it reads SSKISFTDSK…SQVSPSYPEK (103 aa). The span at 144–158 shows a compositional bias: low complexity; it reads PSSQKKPSKPSAPKK. Basic residues predominate over residues 169–185; it reads HRTRSPKKAHRQAHAHK.

It localises to the membrane. This is an uncharacterized protein from Bos taurus (Bovine).